A 338-amino-acid polypeptide reads, in one-letter code: MENLDALVSQALEAVQHAEDINALEQIRVHFLGKKGELTQVMKTLGNLPAEERPQVGALINVAKERVTEVLNARKAAFEEAELSAKLAAECIDVTLPGRGQTSGGLHPITRTLERIEQFFTHIGYGIAEGPEVEDDYHNFEALNIPGHHPARSMHDTFYFNANMLLRTHTSPVQVRTMESQQPPIRIVCPGRVYRSDSDITHSPMFHQVEGLLVDRDINFADLKGTIEEFLRVFFEKELAVRFRPSYFPFTEPSAEVDMECVMCSGKGCRVCKQTGWLEVMGCGMVHPNVLRMSGIDPEEFQGFAFGMGAERLAMLRYGVNDLRLFFDNDLRFLAQFR.

Residue Glu-252 participates in Mg(2+) binding.

It belongs to the class-II aminoacyl-tRNA synthetase family. Phe-tRNA synthetase alpha subunit type 1 subfamily. In terms of assembly, tetramer of two alpha and two beta subunits. The cofactor is Mg(2+).

It localises to the cytoplasm. The enzyme catalyses tRNA(Phe) + L-phenylalanine + ATP = L-phenylalanyl-tRNA(Phe) + AMP + diphosphate + H(+). The sequence is that of Phenylalanine--tRNA ligase alpha subunit from Pseudomonas fluorescens (strain ATCC BAA-477 / NRRL B-23932 / Pf-5).